We begin with the raw amino-acid sequence, 914 residues long: Protein translocase subunit SecA (914 aa).

Residues glutamine 87, 105 to 109, and aspartate 508 contribute to the ATP site; that span reads GEGKT. Zn(2+)-binding residues include cysteine 898, cysteine 900, cysteine 909, and histidine 910.

The protein belongs to the SecA family. In terms of assembly, monomer and homodimer. Part of the essential Sec protein translocation apparatus which comprises SecA, SecYEG and auxiliary proteins SecDF-YajC and YidC. It depends on Zn(2+) as a cofactor.

Its subcellular location is the cell inner membrane. The protein localises to the cytoplasm. The catalysed reaction is ATP + H2O + cellular proteinSide 1 = ADP + phosphate + cellular proteinSide 2.. In terms of biological role, part of the Sec protein translocase complex. Interacts with the SecYEG preprotein conducting channel. Has a central role in coupling the hydrolysis of ATP to the transfer of proteins into and across the cell membrane, serving both as a receptor for the preprotein-SecB complex and as an ATP-driven molecular motor driving the stepwise translocation of polypeptide chains across the membrane. In Xylella fastidiosa (strain M23), this protein is Protein translocase subunit SecA.